The sequence spans 233 residues: MADS-box protein CMB1 (233 aa).

The MADS-box domain maps to Arg-3–Cys-58. The region spanning Thr-87–Ser-177 is the K-box domain.

It is found in the nucleus. The sequence is that of MADS-box protein CMB1 (CMB1) from Dianthus caryophyllus (Carnation).